Reading from the N-terminus, the 207-residue chain is p-benzoquinone reductase (207 aa).

Residues I5–V196 form the Flavodoxin-like domain. FMN-binding positions include S11–I16, T84–F86, S119–G125, and H140. Position 13 (Y13) interacts with NADP(+).

It belongs to the WrbA family. As to quaternary structure, homodimer. FMN serves as cofactor.

The enzyme catalyses 1,4-benzoquinone + NADPH + H(+) = hydroquinone + NADP(+). It functions in the pathway xenobiotic degradation; 4-nitrophenol degradation. Its function is as follows. Involved in the degradation of para-nitrophenol (PNP). Catalyzes the reduction of p-benzoquinone to hydroquinone. In Pseudomonas sp. (strain WBC-3), this protein is p-benzoquinone reductase (pnpB).